Reading from the N-terminus, the 443-residue chain is DNA primase DnaG (443 aa).

The region spanning Asp169–Tyr243 is the Toprim domain. The Mg(2+) site is built by Glu175, Asp217, and Asp219.

Belongs to the archaeal DnaG primase family. Forms a ternary complex with MCM helicase and DNA. Mg(2+) serves as cofactor.

It carries out the reaction ssDNA + n NTP = ssDNA/pppN(pN)n-1 hybrid + (n-1) diphosphate.. Functionally, RNA polymerase that catalyzes the synthesis of short RNA molecules used as primers for DNA polymerase during DNA replication. This chain is DNA primase DnaG, found in Methanococcus vannielii (strain ATCC 35089 / DSM 1224 / JCM 13029 / OCM 148 / SB).